The primary structure comprises 192 residues: Fe/S biogenesis protein NfuA (192 aa).

[4Fe-4S] cluster is bound by residues C149 and C152.

This sequence belongs to the NfuA family. As to quaternary structure, homodimer. Requires [4Fe-4S] cluster as cofactor.

In terms of biological role, involved in iron-sulfur cluster biogenesis. Binds a 4Fe-4S cluster, can transfer this cluster to apoproteins, and thereby intervenes in the maturation of Fe/S proteins. Could also act as a scaffold/chaperone for damaged Fe/S proteins. The protein is Fe/S biogenesis protein NfuA of Shewanella oneidensis (strain ATCC 700550 / JCM 31522 / CIP 106686 / LMG 19005 / NCIMB 14063 / MR-1).